The following is a 536-amino-acid chain: Caspase recruitment domain-containing protein 9 (536 aa).

Phosphoserine is present on S2. 3 residues coordinate Zn(2+): D3, C10, and H73. Residues 6–98 form the CARD domain; sequence NDDECWSVLE…QLYKKVTGKE (93 aa). The tract at residues 99-116 is linker; sequence PARVFSMIIDASGESGLT. Coiled coils occupy residues 117 to 277 and 332 to 419; these read QLLM…DRSS and LRKD…QQLE. A Glycyl lysine isopeptide (Lys-Gly) (interchain with G-Cter in ubiquitin) cross-link involves residue K125. T231 carries the post-translational modification Phosphothreonine. The residue at position 277 (S277) is a Phosphoserine. Phosphoserine is present on residues S424, S425, S431, S450, S460, S483, and S498. Positions 427 to 536 are disordered; it reads LEDGSPRRSQ…GSDNTDTEGS (110 aa). Residues 487-502 are compositionally biased toward basic and acidic residues; the sequence is PPEKERRRLKESFENY. The span at 503 to 513 shows a compositional bias: basic residues; it reads RRKRALRKMQK. T531 and T533 each carry phosphothreonine; by CK2.

Monomer. Homodimer; homodimerization is mediated by the CARD domain which forms an extensive interaction with the adjacent linker and coiled-coil regions; leads to an autoinhibited state. Homomultimer; polymerizes following activation, forming a nucleating helical template that seeds BCL10-filament formation via a CARD-CARD interaction. Interacts (via CARD domain) with BCL10 (via CARD domain); interaction takes place following CARD9 activation and polymerization, leading to the formation of a filamentous CBM complex assembly. Component of a CBM complex (CARD9-BCL10, MALT1), composed of CARD9, BCL10 and MALT1. Interacts with RASGRF1. Interacts with NOD2 (via NACHT domain); interaction is direct. Interacts with RIPK2. Interacts with VHL; without leading to protein degradation. In terms of processing, phosphorylated at Thr-231 by PRKCD downstream of C-type lectin receptors activation: phosphorylation promotes interaction with BCL10, followed by activation of NF-kappa-B and MAP kinase p38 pathways. Phosphorylated at Thr-531 and Thr-533 by CK2 following interaction with VHL, leading to inhibit the ability to activate NF-kappa-B. Post-translationally, ubiquitinated at Lys-125 via 'Lys-27'-linked ubiquitin by TRIM62 downstream of C-type lectin receptors activation; leading to CARD9 activation, followed by activation of NF-kappa-B and MAP kinase p38 pathways. Deubiquitinated at Lys-125 by USP15, inhibiting CARD9. In terms of tissue distribution, expression is restricted to several populations of phagocytes, such as macrophages, monocytes, and dendritic cells. Highly expressed in spleen. Also detected in liver, placenta, lung, peripheral blood leukocytes and in brain.

It localises to the cytoplasm. Its activity is regulated as follows. Maintained in an autoinhibited state via homodimerization in which the CARD domain forms an extensive interaction with the adjacent linker and coiled-coil regions. Activation downstream of C-type lectin receptors, by phosphorylation by PRKCD and/or ubiquitination by TRIM62, triggers disruption of the CARD domain-coiled coil interface, CARD9 homooligomerization and BCL10 recruitment, followed by activation of NF-kappa-B and MAP kinase p38 pathways. Zinc-binding inhibits activation by stabilizing the CARD ground-state conformation and restricting its capacity to form BCL10-nucleating filaments. Its function is as follows. Adapter protein that plays a key role in innate immune response against fungi by forming signaling complexes downstream of C-type lectin receptors. CARD9-mediated signals are essential for antifungal immunity against a subset of fungi from the phylum Ascomycota. Transduces signals in myeloid cells downstream of C-type lectin receptors CLEC7A (dectin-1), CLEC6A (dectin-2) and CLEC4E (Mincle), which detect pathogen-associated molecular pattern metabolites (PAMPs), such as fungal carbohydrates, and trigger CARD9 activation. Upon activation, CARD9 homooligomerizes to form a nucleating helical template that recruits BCL10 via CARD-CARD interaction, thereby promoting polymerization of BCL10 and subsequent recruitment of MALT1: this leads to activation of NF-kappa-B and MAP kinase p38 (MAPK11, MAPK12, MAPK13 and/or MAPK14) pathways which stimulate expression of genes encoding pro-inflammatory cytokines and chemokines. CARD9 signaling in antigen-presenting cells links innate sensing of fungi to the activation of adaptive immunity and provides a cytokine milieu that induces the development and subsequent of interleukin 17-producing T helper (Th17) cells. Also involved in activation of myeloid cells via classical ITAM-associated receptors and TLR: required for TLR-mediated activation of MAPK, while it is not required for TLR-induced activation of NF-kappa-B. CARD9 can also be engaged independently of BCL10: forms a complex with RASGRF1 downstream of C-type lectin receptors, which recruits and activates HRAS, leading to ERK activation and the production of cytokines. Acts as an important regulator of the intestinal commensal fungi (mycobiota) component of the gut microbiota. Plays an essential role in antifungal immunity against dissemination of gut fungi: acts by promoting induction of antifungal IgG antibodies response in CX3CR1(+) macrophages to confer protection against disseminated C.albicans or C.auris infection. Also mediates immunity against other pathogens, such as certain bacteria, viruses and parasites; CARD9 signaling is however redundant with other innate immune responses. In response to L.monocytogenes infection, required for the production of inflammatory cytokines activated by intracellular peptidoglycan: acts by connecting NOD2 recognition of peptidoglycan to downstream activation of MAP kinases (MAPK) without activating NF-kappa-B. This is Caspase recruitment domain-containing protein 9 from Homo sapiens (Human).